Reading from the N-terminus, the 260-residue chain is Cytochrome c oxidase subunit 2 (260 aa).

Topologically, residues 1–43 (MILRSLSCRFLTIALCDAAEPWQLGFQDAATPMMQGIIDLHHD) are mitochondrial intermembrane. A helical transmembrane segment spans residues 44–64 (IFFFLILILVFVLWMLVRALW). Topologically, residues 65–84 (HFNEQTNPIPQRIVHGTTIE) are mitochondrial matrix. A helical membrane pass occupies residues 85–105 (IIWTIFPSVILLFIAIPSFAL). Residues 106–260 (LYSMDGVLVD…VSNQLILQTN (155 aa)) lie on the Mitochondrial intermembrane side of the membrane. Cu cation-binding residues include H189, C224, E226, C228, H232, and M235. E226 serves as a coordination point for Mg(2+).

It belongs to the cytochrome c oxidase subunit 2 family. Component of the cytochrome c oxidase (complex IV, CIV), a multisubunit enzyme composed of a catalytic core of 3 subunits and several supernumerary subunits. The complex exists as a monomer or a dimer and forms supercomplexes (SCs) in the inner mitochondrial membrane with ubiquinol-cytochrome c oxidoreductase (cytochrome b-c1 complex, complex III, CIII). Cu cation is required as a cofactor.

Its subcellular location is the mitochondrion inner membrane. The catalysed reaction is 4 Fe(II)-[cytochrome c] + O2 + 8 H(+)(in) = 4 Fe(III)-[cytochrome c] + 2 H2O + 4 H(+)(out). Its function is as follows. Component of the cytochrome c oxidase, the last enzyme in the mitochondrial electron transport chain which drives oxidative phosphorylation. The respiratory chain contains 3 multisubunit complexes succinate dehydrogenase (complex II, CII), ubiquinol-cytochrome c oxidoreductase (cytochrome b-c1 complex, complex III, CIII) and cytochrome c oxidase (complex IV, CIV), that cooperate to transfer electrons derived from NADH and succinate to molecular oxygen, creating an electrochemical gradient over the inner membrane that drives transmembrane transport and the ATP synthase. Cytochrome c oxidase is the component of the respiratory chain that catalyzes the reduction of oxygen to water. Electrons originating from reduced cytochrome c in the intermembrane space (IMS) are transferred via the dinuclear copper A center (CU(A)) of subunit 2 and heme A of subunit 1 to the active site in subunit 1, a binuclear center (BNC) formed by heme A3 and copper B (CU(B)). The BNC reduces molecular oxygen to 2 water molecules using 4 electrons from cytochrome c in the IMS and 4 protons from the mitochondrial matrix. The polypeptide is Cytochrome c oxidase subunit 2 (COX2) (Triticum aestivum (Wheat)).